A 1052-amino-acid chain; its full sequence is Ubiquitin-like modifier-activating enzyme 6 (1052 aa).

M1 bears the N-acetylmethionine mark. The tract at residues M1–G21 is disordered. An ATP-binding site is contributed by R46. At T54 the chain carries Phosphothreonine. S301 carries the post-translational modification Phosphoserine. Positions 470 and 497 each coordinate ATP. Mg(2+)-binding residues include D499 and E502. ATP is bound by residues N505, R508, Q509, and K521. K544 bears the N6-acetyllysine mark. V545 serves as a coordination point for ATP. Mg(2+) is bound at residue D569. N570 is a binding site for ATP. C625 acts as the Glycyl thioester intermediate in catalysis. K729 bears the N6-acetyllysine mark. At S737 the chain carries Phosphoserine.

It belongs to the ubiquitin-activating E1 family. As to quaternary structure, forms a thioester with UBD in cells stimulated with tumor necrosis factor-alpha (TNFa) and interferon-gamma (IFNg). In terms of tissue distribution, widely expressed. Isoform 2 is predominantly expressed in testis with higher expression in adult testis than in fetal testis.

It carries out the reaction ATP + ubiquitin + [E1 ubiquitin-activating enzyme]-L-cysteine = AMP + diphosphate + S-ubiquitinyl-[E1 ubiquitin-activating enzyme]-L-cysteine.. It functions in the pathway protein modification; protein ubiquitination. Its function is as follows. Activates ubiquitin by first adenylating its C-terminal glycine residue with ATP, and thereafter linking this residue to the side chain of a cysteine residue in E1, yielding a ubiquitin-E1 thioester and free AMP. Specific for ubiquitin, does not activate ubiquitin-like peptides. Also activates UBD/FAT10 conjugation via adenylation of its C-terminal glycine. Differs from UBE1 in its specificity for substrate E2 charging. Does not charge cell cycle E2s, such as CDC34. Essential for embryonic development. Isoform 2 may play a key role in ubiquitin system and may influence spermatogenesis and male fertility. In Homo sapiens (Human), this protein is Ubiquitin-like modifier-activating enzyme 6 (UBA6).